We begin with the raw amino-acid sequence, 454 residues long: Immediate-early protein ICP-46 homolog (454 aa).

Residues 330–357 (EKDIETIEKYEKTIQELIVELHNLYLKR) adopt a coiled-coil conformation. The disordered stretch occupies residues 428 to 454 (SSPTASLSSLSPPSSNNNSPIRSPIRM).

The protein belongs to the IIV-6 393L family.

This is Immediate-early protein ICP-46 homolog from Invertebrate iridescent virus 6 (IIV-6).